Reading from the N-terminus, the 98-residue chain is NADH-ubiquinone oxidoreductase chain 4L (98 aa).

3 helical membrane passes run 1 to 21 (MPLI…GVLI), 26 to 46 (LMSS…LVSL), and 61 to 81 (LILL…LVMV).

This sequence belongs to the complex I subunit 4L family. In terms of assembly, core subunit of respiratory chain NADH dehydrogenase (Complex I) which is composed of 45 different subunits.

It is found in the mitochondrion inner membrane. The catalysed reaction is a ubiquinone + NADH + 5 H(+)(in) = a ubiquinol + NAD(+) + 4 H(+)(out). Core subunit of the mitochondrial membrane respiratory chain NADH dehydrogenase (Complex I) which catalyzes electron transfer from NADH through the respiratory chain, using ubiquinone as an electron acceptor. Part of the enzyme membrane arm which is embedded in the lipid bilayer and involved in proton translocation. The sequence is that of NADH-ubiquinone oxidoreductase chain 4L (MT-ND4L) from Nycticebus coucang (Slow loris).